Reading from the N-terminus, the 432-residue chain is Protein arginine N-methyltransferase 2 (432 aa).

Residues 1–11 show a composition bias toward low complexity; it reads MESSSECSSIS. The segment at 1–22 is disordered; that stretch reads MESSSECSSISDFQDSTEGDDA. Positions 29–88 constitute an SH3 domain; it reads LCMREYVVICDYVATDNTQLSLCSGDKVLLLNAVSQDWWWVNHNGTCGYVPASHLHDALN. Residues 101–405 enclose the SAM-dependent MTase PRMT-type domain; sequence DEEYYGSYKT…FERNSVWRRH (305 aa). Positions 114, 123, 147, 170, and 199 each coordinate S-adenosyl-L-methionine. Residues glutamate 213 and glutamate 222 contribute to the active site.

The protein belongs to the class I-like SAM-binding methyltransferase superfamily. Protein arginine N-methyltransferase family. Interacts with ctnnb1.

The protein resides in the cytoplasm. Its subcellular location is the nucleus. It catalyses the reaction L-arginyl-[protein] + 2 S-adenosyl-L-methionine = N(omega),N(omega)-dimethyl-L-arginyl-[protein] + 2 S-adenosyl-L-homocysteine + 2 H(+). Its function is as follows. Arginine methyltransferase that methylates the guanidino nitrogens of arginyl residues in proteins such as histones. Involved in growth regulation. Involved in embryonic dorsal development. The polypeptide is Protein arginine N-methyltransferase 2 (prmt2) (Xenopus laevis (African clawed frog)).